The sequence spans 129 residues: Ribosome-binding factor A (129 aa).

Belongs to the RbfA family. Monomer. Binds 30S ribosomal subunits, but not 50S ribosomal subunits or 70S ribosomes.

The protein localises to the cytoplasm. One of several proteins that assist in the late maturation steps of the functional core of the 30S ribosomal subunit. Associates with free 30S ribosomal subunits (but not with 30S subunits that are part of 70S ribosomes or polysomes). Required for efficient processing of 16S rRNA. May interact with the 5'-terminal helix region of 16S rRNA. In Thermomicrobium roseum (strain ATCC 27502 / DSM 5159 / P-2), this protein is Ribosome-binding factor A.